Consider the following 110-residue polypeptide: UPF0122 protein SPG_1182 (110 aa).

This sequence belongs to the UPF0122 family.

Might take part in the signal recognition particle (SRP) pathway. This is inferred from the conservation of its genetic proximity to ftsY/ffh. May be a regulatory protein. This is UPF0122 protein SPG_1182 from Streptococcus pneumoniae serotype 19F (strain G54).